The following is a 322-amino-acid chain: Lignin-forming anionic peroxidase (322 aa).

The N-terminal stretch at 1 to 27 (MNTPTQSFRAKAAIFSLLLLSCMQCHA) is a signal peptide. Gln-28 carries the post-translational modification Pyrrolidone carboxylic acid. 4 disulfides stabilise this stretch: Cys-38-Cys-118, Cys-71-Cys-76, Cys-124-Cys-318, and Cys-203-Cys-229. Catalysis depends on His-69, which acts as the Proton acceptor. Positions 70, 73, 75, 77, and 79 each coordinate Ca(2+). Pro-166 contributes to the substrate binding site. His-196 contacts heme b. Thr-197 serves as a coordination point for Ca(2+). A glycan (N-linked (GlcNAc...) asparagine) is linked at Asn-213. Residues Asp-242, Thr-245, and Asp-250 each coordinate Ca(2+).

It belongs to the peroxidase family. Classical plant (class III) peroxidase subfamily. Ca(2+) is required as a cofactor. It depends on heme b as a cofactor. In terms of tissue distribution, mesophyll protoplasts and to a much lesser extent, roots and germinating seeds.

The protein resides in the secreted. It catalyses the reaction 2 a phenolic donor + H2O2 = 2 a phenolic radical donor + 2 H2O. In terms of biological role, removal of H(2)O(2), oxidation of toxic reductants, biosynthesis and degradation of lignin, suberization, auxin catabolism, response to environmental stresses such as wounding, pathogen attack and oxidative stress. These functions might be dependent on each isozyme/isoform in each plant tissue. Functionally, plays an integral role in secondary cell wall biosynthesis by the polymerization of cinnamyl alcohols into lignin and by forming rigid cross-links between cellulose, pectin, hydroxy-proline-rich glycoproteins, and lignin. The chain is Lignin-forming anionic peroxidase from Nicotiana sylvestris (Wood tobacco).